Here is a 133-residue protein sequence, read N- to C-terminus: Small ribosomal subunit protein uS9 (133 aa).

Positions 101-133 (MKPKGLLTRDPREVERKKYGLKKARRAPQFSKR) are disordered. Residues 107-118 (LTRDPREVERKK) are compositionally biased toward basic and acidic residues. Residues 119 to 133 (YGLKKARRAPQFSKR) show a composition bias toward basic residues.

Belongs to the universal ribosomal protein uS9 family.

In Deinococcus radiodurans (strain ATCC 13939 / DSM 20539 / JCM 16871 / CCUG 27074 / LMG 4051 / NBRC 15346 / NCIMB 9279 / VKM B-1422 / R1), this protein is Small ribosomal subunit protein uS9.